Here is a 164-residue protein sequence, read N- to C-terminus: Arginine repressor (164 aa).

It belongs to the ArgR family.

Its subcellular location is the cytoplasm. It participates in amino-acid biosynthesis; L-arginine biosynthesis [regulation]. Its function is as follows. Regulates arginine biosynthesis genes. The protein is Arginine repressor of Thermus thermophilus (strain ATCC BAA-163 / DSM 7039 / HB27).